The following is a 235-amino-acid chain: Phosphoribosylaminoimidazole-succinocarboxamide synthase (235 aa).

Belongs to the SAICAR synthetase family.

It catalyses the reaction 5-amino-1-(5-phospho-D-ribosyl)imidazole-4-carboxylate + L-aspartate + ATP = (2S)-2-[5-amino-1-(5-phospho-beta-D-ribosyl)imidazole-4-carboxamido]succinate + ADP + phosphate + 2 H(+). It functions in the pathway purine metabolism; IMP biosynthesis via de novo pathway; 5-amino-1-(5-phospho-D-ribosyl)imidazole-4-carboxamide from 5-amino-1-(5-phospho-D-ribosyl)imidazole-4-carboxylate: step 1/2. This is Phosphoribosylaminoimidazole-succinocarboxamide synthase from Chloroherpeton thalassium (strain ATCC 35110 / GB-78).